A 370-amino-acid polypeptide reads, in one-letter code: MIKNHFTFQKLNGITPYIWTIFFILPFYFIWKSSSTFVIIVGIILTLLFFSVYRFAFVSKGWTIYLWGFLLIGISTASITLFSYIYFAFFIAYFIGNIKERVPFHILYYVHLISAAVAANFSLVLKKEFFLTQIPFVVITLISAILLPFSIKSRKERERLEEKLEDANERIAELVKLEERQRIARDLHDTLGQKLSLIGLKSDLARKLIYKDPEQAARELKSVQQTARTSLNEVRKIVSSMKGIRLKDELINIKQILEAADIMFIYEEEKWPENISLLNENILSMCLKEAVTNVVKHSQAKTCRVDIQQLWKEVVITVSDDGTFKGEENSFSKGHGLLGMRERLEFANGSLHIDTENGTKLTMAIPNNSK.

At 1 to 10 the chain is on the extracellular side; it reads MIKNHFTFQK. The helical transmembrane segment at 11-31 threads the bilayer; it reads LNGITPYIWTIFFILPFYFIW. Residues 32–36 lie on the Cytoplasmic side of the membrane; the sequence is KSSST. The chain crosses the membrane as a helical span at residues 37–57; the sequence is FVIIVGIILTLLFFSVYRFAF. Topologically, residues 58–70 are extracellular; sequence VSKGWTIYLWGFL. Residues 71–91 form a helical membrane-spanning segment; that stretch reads LIGISTASITLFSYIYFAFFI. Over 92–103 the chain is Cytoplasmic; sequence AYFIGNIKERVP. Residues 104 to 124 form a helical membrane-spanning segment; it reads FHILYYVHLISAAVAANFSLV. The Extracellular segment spans residues 125–128; the sequence is LKKE. A helical membrane pass occupies residues 129–149; that stretch reads FFLTQIPFVVITLISAILLPF. Topologically, residues 150–370 are cytoplasmic; the sequence is SIKSRKERER…LTMAIPNNSK (221 aa). In terms of domain architecture, Histidine kinase spans 186-369; sequence DLHDTLGQKL…KLTMAIPNNS (184 aa). His-188 carries the post-translational modification Phosphohistidine; by autocatalysis.

Its subcellular location is the cell membrane. The enzyme catalyses ATP + protein L-histidine = ADP + protein N-phospho-L-histidine.. In terms of biological role, member of the two-component regulatory system DesR/DesK, responsible for cold induction of the des gene coding for the Delta5 acyl-lipid desaturase. Acts as a sensor of the membrane fluidity. Probably activates DesR by phosphorylation. The polypeptide is Sensor histidine kinase DesK (desK) (Bacillus subtilis (strain 168)).